A 33-amino-acid polypeptide reads, in one-letter code: Photosystem II reaction center protein Psb30 (33 aa).

The chain crosses the membrane as a helical span at residues 5–25 (VIAQLTVLALIVASGPLVIAL).

It belongs to the Psb30/Ycf12 family. In terms of assembly, PSII is composed of 1 copy each of membrane proteins PsbA, PsbB, PsbC, PsbD, PsbE, PsbF, PsbH, PsbI, PsbJ, PsbK, PsbL, PsbM, PsbT, PsbX, PsbY, PsbZ, Psb30/Ycf12, peripheral proteins of the oxygen-evolving complex and a large number of cofactors. It forms dimeric complexes.

The protein localises to the plastid. The protein resides in the chloroplast thylakoid membrane. A core subunit of photosystem II (PSII), probably helps stabilize the reaction center. This Marchantia polymorpha (Common liverwort) protein is Photosystem II reaction center protein Psb30.